A 221-amino-acid chain; its full sequence is 7-cyano-7-deazaguanine synthase (221 aa).

10–20 serves as a coordination point for ATP; it reads FSGGQDSTTCL. Zn(2+) is bound by residues Cys186, Cys195, Cys198, and Cys201.

This sequence belongs to the QueC family. As to quaternary structure, homodimer. Zn(2+) serves as cofactor.

It carries out the reaction 7-carboxy-7-deazaguanine + NH4(+) + ATP = 7-cyano-7-deazaguanine + ADP + phosphate + H2O + H(+). Its pathway is purine metabolism; 7-cyano-7-deazaguanine biosynthesis. Catalyzes the ATP-dependent conversion of 7-carboxy-7-deazaguanine (CDG) to 7-cyano-7-deazaguanine (preQ(0)). The polypeptide is 7-cyano-7-deazaguanine synthase (Geobacillus sp. (strain WCH70)).